The chain runs to 203 residues: MKSGNGPLRVGIGGPVGSGKTALTEKLCKAMSGDYSVAVVTNDIYTKEDAEALVRMQALPSERIVGVETGGCPHTAIREDATINLQAIAGLNAQFPDLDVVFIESGGDNLAATFSPDLADITIYVISVCQGEEIPRKGGPGITRSDLLVINKKDLAPYVGADLTVMDSDATRMRNAMPFVFTDMKRGDGVDRIVGFLKEQGGL.

Residue 14–21 (GPVGSGKT) participates in GTP binding.

This sequence belongs to the SIMIBI class G3E GTPase family. UreG subfamily. As to quaternary structure, homodimer. UreD, UreF and UreG form a complex that acts as a GTP-hydrolysis-dependent molecular chaperone, activating the urease apoprotein by helping to assemble the nickel containing metallocenter of UreC. The UreE protein probably delivers the nickel.

Its subcellular location is the cytoplasm. In terms of biological role, facilitates the functional incorporation of the urease nickel metallocenter. This process requires GTP hydrolysis, probably effectuated by UreG. In Agrobacterium fabrum (strain C58 / ATCC 33970) (Agrobacterium tumefaciens (strain C58)), this protein is Urease accessory protein UreG.